A 272-amino-acid chain; its full sequence is Expansin-B16 (272 aa).

A signal peptide spans 1–25; sequence MAAFSSSSSAPMLIRSVLFVSLLSA. Positions 63 to 173 constitute an Expansin-like EG45 domain; the sequence is GGACGYGTLV…RRTACKYGGK (111 aa). Cystine bridges form between cysteine 66/cysteine 95, cysteine 98/cysteine 168, and cysteine 103/cysteine 109. The 82-residue stretch at 186–267 folds into the Expansin-like CBD domain; sequence FWLSLLVEFE…NWTPKATYTS (82 aa).

This sequence belongs to the expansin family. Expansin B subfamily.

Its subcellular location is the secreted. It localises to the cell wall. The protein localises to the membrane. May cause loosening and extension of plant cell walls by disrupting non-covalent bonding between cellulose microfibrils and matrix glucans. No enzymatic activity has been found. May be required for rapid internodal elongation in deepwater rice during submergence. The sequence is that of Expansin-B16 (EXPB16) from Oryza sativa subsp. japonica (Rice).